We begin with the raw amino-acid sequence, 115 residues long: Promotilin (115 aa).

An N-terminal signal peptide occupies residues M1–A25. The tract at residues Q39–E72 is disordered.

The protein belongs to the motilin family.

Its subcellular location is the secreted. Plays an important role in the regulation of interdigestive gastrointestinal motility and indirectly causes rhythmic contraction of duodenal and colonic smooth muscle. This Homo sapiens (Human) protein is Promotilin (MLN).